The following is a 395-amino-acid chain: Dihydroorotate dehydrogenase (quinone), mitochondrial (395 aa).

A mitochondrion; not cleaved-targeting transit peptide spans M1–A10. Residues M1 to A10 lie on the Mitochondrial matrix side of the membrane. The chain crosses the membrane as a helical span at residues L11–A30. The Mitochondrial intermembrane segment spans residues T31–R395. Residues A95 to K99 and S119 contribute to the FMN site. K99 serves as a coordination point for substrate. A substrate-binding site is contributed by N144–F148. FMN contacts are provided by N180 and N211. N211–N216 serves as a coordination point for substrate. S214 serves as the catalytic Nucleophile. Residues K254 and T282 each coordinate FMN. N283–T284 is a substrate binding site. Residues G305, G334, and Y355–T356 each bind FMN.

Belongs to the dihydroorotate dehydrogenase family. Type 2 subfamily. Monomer. The cofactor is FMN. The uncleaved transit peptide is required for mitochondrial targeting and proper membrane integration.

The protein localises to the mitochondrion inner membrane. It carries out the reaction (S)-dihydroorotate + a quinone = orotate + a quinol. It participates in pyrimidine metabolism; UMP biosynthesis via de novo pathway; orotate from (S)-dihydroorotate (quinone route): step 1/1. Catalyzes the conversion of dihydroorotate to orotate with quinone as electron acceptor. Required for UMP biosynthesis via de novo pathway. The protein is Dihydroorotate dehydrogenase (quinone), mitochondrial (Dhodh) of Mus musculus (Mouse).